A 228-amino-acid polypeptide reads, in one-letter code: Ribulose-phosphate 3-epimerase-like protein 1 (228 aa).

Ser-10 is a substrate binding site. Residues His-35, Asp-37, and His-70 each coordinate a divalent metal cation. Asp-37 functions as the Proton acceptor in the catalytic mechanism. Residues His-70, Gly-146–Glu-149, Asp-175–Gly-177, and Gly-197–Ser-198 contribute to the substrate site. Asp-175 contacts a divalent metal cation. Asp-175 (proton donor) is an active-site residue.

Belongs to the ribulose-phosphate 3-epimerase family. As to quaternary structure, homodimer. The cofactor is Fe(2+). Mn(2+) is required as a cofactor. Requires Zn(2+) as cofactor. Co(2+) serves as cofactor.

The enzyme catalyses D-ribulose 5-phosphate = D-xylulose 5-phosphate. The protein operates within carbohydrate degradation. Its function is as follows. Catalyzes the reversible epimerization of D-ribulose 5-phosphate to D-xylulose 5-phosphate. This chain is Ribulose-phosphate 3-epimerase-like protein 1 (RPEL1), found in Homo sapiens (Human).